The following is a 626-amino-acid chain: Dynein, cytoplasmic 1, intermediate chain 2a (626 aa).

Over residues 20 to 43 (QIREEKKRKEEERKKKEAELKKDA) the composition is skewed to basic and acidic residues. Disordered regions lie at residues 20-108 (QIRE…RTLH) and 142-197 (KEVV…HELT). Over residues 82-99 (TAKSVGSPSEAGSQDSGD) the composition is skewed to polar residues. The span at 160 to 169 (KDEEDEEEET) shows a compositional bias: acidic residues. Residues 177–197 (ETEKEKPEEKQVEEALPHELT) are compositionally biased toward basic and acidic residues. WD repeat units lie at residues 265 to 314 (SKQR…ATPE), 318 to 358 (HCQS…RTPV), 367 to 408 (AHTH…QPQD), 417 to 457 (SKSV…AGIS), 462 to 507 (GHHG…PLYS), 510 to 550 (DNSD…EVPT), and 556 to 595 (DGSP…AVPR).

This sequence belongs to the dynein intermediate chain family. As to quaternary structure, homodimer. The cytoplasmic dynein 1 complex consists of two catalytic heavy chains (HCs) and a number of non-catalytic subunits presented by intermediate chains (ICs), light intermediate chains (LICs) and light chains (LCs); the composition seems to vary in respect to the IC, LIC and LC composition. The heavy chain homodimer serves as a scaffold for the probable homodimeric assembly of the respective non-catalytic subunits. The ICs and LICs bind directly to the HC dimer and the LCs assemble on the IC dimer.

It is found in the cytoplasm. Its subcellular location is the cytoskeleton. Functionally, acts as one of several non-catalytic accessory components of the cytoplasmic dynein 1 complex that are thought to be involved in linking dynein to cargos and to adapter proteins that regulate dynein function. Cytoplasmic dynein 1 acts as a motor for the intracellular retrograde motility of vesicles and organelles along microtubules. Plays a role in the development of anterior brain and cartilaginous structures. The sequence is that of Dynein, cytoplasmic 1, intermediate chain 2a (dync1i2a) from Danio rerio (Zebrafish).